The chain runs to 260 residues: Type III pantothenate kinase (260 aa).

Asp6–Val13 contacts ATP. Position 107–110 (Gly107–Arg110) interacts with substrate. Asp109 acts as the Proton acceptor in catalysis. Asp129 is a K(+) binding site. Thr132 is a binding site for ATP. Thr184 is a substrate binding site.

Belongs to the type III pantothenate kinase family. As to quaternary structure, homodimer. NH4(+) serves as cofactor. K(+) is required as a cofactor.

It is found in the cytoplasm. It catalyses the reaction (R)-pantothenate + ATP = (R)-4'-phosphopantothenate + ADP + H(+). The protein operates within cofactor biosynthesis; coenzyme A biosynthesis; CoA from (R)-pantothenate: step 1/5. In terms of biological role, catalyzes the phosphorylation of pantothenate (Pan), the first step in CoA biosynthesis. This chain is Type III pantothenate kinase, found in Ruegeria sp. (strain TM1040) (Silicibacter sp.).